A 130-amino-acid chain; its full sequence is Protein PELPK2 (130 aa).

A signal peptide spans Met1–Ala32. 13 repeat units span residues Pro47 to Lys51, Pro52 to Lys56, Pro58 to Lys62, Leu63 to Lys67, Pro69 to Lys73, Pro74 to Lys78, Pro80 to Lys84, Pro91 to Lys95, Pro97 to Lys101, Phe102 to Lys106, Pro108 to Lys112, Pro113 to Lys117, and Phe121 to Lys125. Positions Pro47–Lys125 are 13 X 5 AA tandem repeat of P-[DEGQ]-[AEFLIV]-[QPT]-K. Basic and acidic residues predominate over residues Ile71–Lys84. Positions Ile71–Pro130 are disordered. A compositionally biased stretch (basic and acidic residues) spans Glu98 to Lys117.

The protein resides in the secreted. It is found in the cell wall. In Arabidopsis thaliana (Mouse-ear cress), this protein is Protein PELPK2.